The following is a 540-amino-acid chain: Fumonisin B1 esterase (540 aa).

Ser240 functions as the Acyl-ester intermediate in the catalytic mechanism. Residues Glu356 and His448 each act as charge relay system in the active site. Positions 521-540 (QVGSGEGLGVSPSKACQPSK) are disordered.

Belongs to the type-B carboxylesterase/lipase family.

It catalyses the reaction fumonisin B1 + 2 H2O = 2 tricarballylate + (2S,3S,5R,10R,12S,14S,15R,16R)-2-amino-12,16-dimethylicosane-3,5,10,14,15-pentol + 2 H(+). Its function is as follows. Involved in degradation of fumonisin B1. Catalyzes the hydrolysis of fumonisin B1 (FB1) to aminopentol (HFB1). The chain is Fumonisin B1 esterase (fumD) from Sphingopyxis macrogoltabida (Sphingomonas macrogoltabidus).